We begin with the raw amino-acid sequence, 203 residues long: Endo-type membrane-bound lytic murein transglycosylase A (203 aa).

Residues 1 to 15 (MKLRWLLILVVFLAG) form the signal peptide. Cysteine 16 is lipidated: N-palmitoyl cysteine. The S-diacylglycerol cysteine moiety is linked to residue cysteine 16.

Belongs to the transglycosylase Slt family.

The protein localises to the cell outer membrane. The enzyme catalyses Endolytic cleavage of the (1-&gt;4)-beta-glycosidic linkage between N-acetylmuramic acid (MurNAc) and N-acetylglucosamine (GlcNAc) residues in peptidoglycan with concomitant formation of a 1,6-anhydrobond in the MurNAc residue.. Murein-degrading enzyme. May play a role in recycling of muropeptides during cell elongation and/or cell division. Preferentially cleaves at a distance of more than two disaccharide units from the ends of the glycan chain. This is Endo-type membrane-bound lytic murein transglycosylase A from Klebsiella pneumoniae subsp. pneumoniae (strain ATCC 700721 / MGH 78578).